A 676-amino-acid polypeptide reads, in one-letter code: Transcription factor RLM1 (676 aa).

Residues 3–57 (RRKIEIQRISDDRNRAVTFIKRKAGLFKKAHELSVLCQVDIAVIILGSNNTFYEF) enclose the MADS-box domain. A DNA-binding region (mef2-type) is located at residues 58-87 (SSVDTNDLIYHYQNDKNLLHEVKDPSDYGD). The span at 103–120 (SSMSNKPSKSNVKGMNQS) shows a compositional bias: polar residues. Residues 103–156 (SSMSNKPSKSNVKGMNQSENDDDENNDEDDDDHGNFERNSNMHSNKKASDKNIP) are disordered. S120 carries the post-translational modification Phosphoserine. A compositionally biased stretch (acidic residues) spans 121 to 134 (ENDDDENNDEDDDD). S164 bears the Phosphoserine mark. Basic and acidic residues predominate over residues 173–183 (DGSEQNKRHPE). 5 disordered regions span residues 173 to 192 (DGSEQNKRHPENALPPLQHL), 202 to 318 (ISRT…RRKL), 330 to 424 (NNNF…PFGS), 472 to 514 (KKQS…VHDL), and 532 to 631 (MGPN…NSST). Residues 260 to 276 (ISPNKFSKPFTNASSRT) are compositionally biased toward polar residues. Residues 284 to 295 (NNSGSNNNDNSN) show a composition bias toward low complexity. Over residues 296-312 (YTQSPSNSLEDSIQQTV) the composition is skewed to polar residues. 3 stretches are compositionally biased toward low complexity: residues 334-359 (SSNSAIPSEPSSASSTSANGNSMGSS), 368-381 (SRSSKISPLSASAS), and 399-417 (PNANAPNGSNNGNGSNNNN). Phosphoserine is present on residues S374 and S377. Residues 472–506 (KKQSQTVPLTTTLTGRPPSTFSGPETSNGPPTGSL) are compositionally biased toward polar residues. Residues 539 to 604 (PGNTNNPGTF…NSNNSYYSNN (66 aa)) show a composition bias toward low complexity. The segment covering 621 to 631 (GDSNNQSNSST) has biased composition (polar residues).

Belongs to the MEF2 family. In terms of assembly, can heterodimerize with SPM1. Interacts with KDX1 and SLT2. Post-translationally, phosphorylated by SLT2.

It localises to the nucleus. In terms of biological role, may function as a transcription factor downstream of MPK1 that is subject to activation by the MPK1 mitogen-activated protein kinase pathway. Binds to the DNA sequence 5'-CTA[TA](4)TAG-3'. At least some RML1 target genes are involved in cell wall biosynthesis. The protein is Transcription factor RLM1 (RLM1) of Saccharomyces cerevisiae (strain ATCC 204508 / S288c) (Baker's yeast).